The sequence spans 236 residues: Protein CUSTOS (236 aa).

Disordered stretches follow at residues 1–57 (MSES…GTTP) and 83–236 (VEPA…KKDE). Composition is skewed to basic and acidic residues over residues 10–51 (NTAR…HDGN) and 156–165 (EKTEEKSTKE). Positions 173–181 (KMKKKKKRK) match the Nucleolar localization signal (NLS1) motif. Positions 182-196 (TSSEESQDKVNHQTE) are enriched in basic and acidic residues. Positions 197 to 210 (KQSNVEGNQEQTTA) are enriched in polar residues. The Nucleolar localization signal (NLS2) motif lies at 211–219 (GERLKKKKK). Residues 214-227 (LKKKKKKKKKKRKK) show a composition bias toward basic residues.

It belongs to the CUSTOS family. As to quaternary structure, interacts (via NLS1 and NLS2) with dvl2; the interaction is negatively regulated by Wnt stimulation. Interacts with csnk1a1. Interacts with ctnnb1; the interaction is positively regulated by Wnt stimulation. Post-translationally, phosphorylated by ck1/csnk1a1.

The protein resides in the nucleus envelope. Functionally, essential for Spemann-Mangold organizer formation and subsequent anterior head development in the embryo. Inhibits canonical Wnt signaling pathway by antagonizing nuclear import of beta-catenin (ctnnb1) during embryogenesis. In Danio rerio (Zebrafish), this protein is Protein CUSTOS.